Consider the following 190-residue polypeptide: Elongation factor P-like protein (190 aa).

Belongs to the elongation factor P family.

The chain is Elongation factor P-like protein from Serratia proteamaculans (strain 568).